Reading from the N-terminus, the 212-residue chain is Large ribosomal subunit protein uL1 (212 aa).

This sequence belongs to the universal ribosomal protein uL1 family. Part of the 50S ribosomal subunit.

Functionally, binds directly to 23S rRNA. Probably involved in E site tRNA release. Its function is as follows. Protein L1 is also a translational repressor protein, it controls the translation of its operon by binding to its mRNA. In Natronomonas pharaonis (strain ATCC 35678 / DSM 2160 / CIP 103997 / JCM 8858 / NBRC 14720 / NCIMB 2260 / Gabara) (Halobacterium pharaonis), this protein is Large ribosomal subunit protein uL1.